A 514-amino-acid polypeptide reads, in one-letter code: 2-isopropylmalate synthase (514 aa).

In terms of domain architecture, Pyruvate carboxyltransferase spans 5 to 267; the sequence is IYIFDTTLRD…HTDIVTEEIT (263 aa). Mn(2+)-binding residues include D14, H202, H204, and N238. Residues 392–514 form a regulatory domain region; sequence KLKYYQVFTG…SKDLQKISAN (123 aa).

It belongs to the alpha-IPM synthase/homocitrate synthase family. LeuA type 1 subfamily. In terms of assembly, homodimer. It depends on Mn(2+) as a cofactor.

It is found in the cytoplasm. It carries out the reaction 3-methyl-2-oxobutanoate + acetyl-CoA + H2O = (2S)-2-isopropylmalate + CoA + H(+). Its pathway is amino-acid biosynthesis; L-leucine biosynthesis; L-leucine from 3-methyl-2-oxobutanoate: step 1/4. In terms of biological role, catalyzes the condensation of the acetyl group of acetyl-CoA with 3-methyl-2-oxobutanoate (2-ketoisovalerate) to form 3-carboxy-3-hydroxy-4-methylpentanoate (2-isopropylmalate). The protein is 2-isopropylmalate synthase of Clostridium kluyveri (strain NBRC 12016).